The primary structure comprises 186 residues: HGPRTase-like protein 3 (186 aa).

This sequence belongs to the purine/pyrimidine phosphoribosyltransferase family. Archaeal HPRT subfamily.

May catalyze a purine salvage reaction, the substrate is unknown. The protein is HGPRTase-like protein 3 of Haloterrigena turkmenica (strain ATCC 51198 / DSM 5511 / JCM 9101 / NCIMB 13204 / VKM B-1734 / 4k) (Halococcus turkmenicus).